A 247-amino-acid polypeptide reads, in one-letter code: MENSDVINFSCLEKELHSALQADRKYQRENDAKFRALNQKVASYEEFRDIVLASHLKPLDRNDISGSPRKQPWNPVACRTNYVCASSEQVQPQLSEVQPRSASEFIRDWRRFAGCSFEKYSLLVSLGGEALQKIFSTEIGLGLLGEFLLILSQCLKSGDEDRVTGVLDGLSKTGRFSINLSLLSQAEQEACEELFNKLKVAAGECHPYKDNSNTSVVCEAGLTHMEDNKTDITTTLKELAGKYGTEK.

The stretch at 12-32 (LEKELHSALQADRKYQRENDA) forms a coiled coil.

This sequence belongs to the DNAAF19/PR46b family. In terms of assembly, homodimer. Expressed in all cells bearing motile cilia.

Its subcellular location is the cytoplasm. The protein resides in the cell projection. The protein localises to the cilium. It localises to the flagellum. Dynein-attachment factor required for cilia motility. This Danio rerio (Zebrafish) protein is Dynein axonemal assembly factor 19 (dnaaf19).